Reading from the N-terminus, the 48-residue chain is 2-deoxy-glucose resistant protein 1, mitochondrial (48 aa).

The N-terminal 28 residues, 1–28 (MQVGFVSQTNCRSFPACIVFLFQMSQRQ), are a transit peptide targeting the mitochondrion.

The protein resides in the mitochondrion. The protein is 2-deoxy-glucose resistant protein 1, mitochondrial (DGR1) of Saccharomyces cerevisiae (strain ATCC 204508 / S288c) (Baker's yeast).